The chain runs to 392 residues: Chaperone protein DnaJ (392 aa).

Residues 5–75 form the J domain; that stretch reads DYYEVLGIDK…QKKQQYDQFG (71 aa). A CR-type zinc finger spans residues 148 to 229; it reads GVEKTIKYKR…CHGTGTAKET (82 aa). The Zn(2+) site is built by cysteine 161, cysteine 164, cysteine 177, cysteine 180, cysteine 203, cysteine 206, cysteine 217, and cysteine 220. CXXCXGXG motif repeat units lie at residues 161 to 168, 177 to 184, 203 to 210, and 217 to 224; these read CENCHGTG, CPTCNGQG, CPDCHGTG, and CKHCHGTG.

This sequence belongs to the DnaJ family. As to quaternary structure, homodimer. The cofactor is Zn(2+).

It localises to the cytoplasm. Functionally, participates actively in the response to hyperosmotic and heat shock by preventing the aggregation of stress-denatured proteins and by disaggregating proteins, also in an autonomous, DnaK-independent fashion. Unfolded proteins bind initially to DnaJ; upon interaction with the DnaJ-bound protein, DnaK hydrolyzes its bound ATP, resulting in the formation of a stable complex. GrpE releases ADP from DnaK; ATP binding to DnaK triggers the release of the substrate protein, thus completing the reaction cycle. Several rounds of ATP-dependent interactions between DnaJ, DnaK and GrpE are required for fully efficient folding. Also involved, together with DnaK and GrpE, in the DNA replication of plasmids through activation of initiation proteins. The sequence is that of Chaperone protein DnaJ from Fusobacterium nucleatum subsp. nucleatum (strain ATCC 25586 / DSM 15643 / BCRC 10681 / CIP 101130 / JCM 8532 / KCTC 2640 / LMG 13131 / VPI 4355).